Consider the following 167-residue polypeptide: NADH-ubiquinone oxidoreductase chain 4 (167 aa).

3 helical membrane-spanning segments follow: residues phenylalanine 2–leucine 22, leucine 44–proline 64, and isoleucine 86–methionine 106.

The protein belongs to the complex I subunit 4 family.

It localises to the mitochondrion membrane. The catalysed reaction is a ubiquinone + NADH + 5 H(+)(in) = a ubiquinol + NAD(+) + 4 H(+)(out). In terms of biological role, core subunit of the mitochondrial membrane respiratory chain NADH dehydrogenase (Complex I) that is believed to belong to the minimal assembly required for catalysis. Complex I functions in the transfer of electrons from NADH to the respiratory chain. The immediate electron acceptor for the enzyme is believed to be ubiquinone. This Carlito syrichta (Philippine tarsier) protein is NADH-ubiquinone oxidoreductase chain 4 (MT-ND4).